We begin with the raw amino-acid sequence, 206 residues long: Adenine phosphoribosyltransferase (206 aa).

This sequence belongs to the purine/pyrimidine phosphoribosyltransferase family. In terms of assembly, homodimer.

It is found in the cytoplasm. It carries out the reaction AMP + diphosphate = 5-phospho-alpha-D-ribose 1-diphosphate + adenine. It participates in purine metabolism; AMP biosynthesis via salvage pathway; AMP from adenine: step 1/1. Catalyzes a salvage reaction resulting in the formation of AMP, that is energically less costly than de novo synthesis. The polypeptide is Adenine phosphoribosyltransferase (Burkholderia mallei (strain NCTC 10229)).